An 87-amino-acid polypeptide reads, in one-letter code: Large ribosomal subunit protein bL31B (87 aa).

This sequence belongs to the bacterial ribosomal protein bL31 family. Type B subfamily. As to quaternary structure, part of the 50S ribosomal subunit.

In Paraburkholderia phymatum (strain DSM 17167 / CIP 108236 / LMG 21445 / STM815) (Burkholderia phymatum), this protein is Large ribosomal subunit protein bL31B.